We begin with the raw amino-acid sequence, 351 residues long: uncharacterized protein (351 aa).

Asp-215, Asp-226, His-290, Glu-319, and Glu-333 together coordinate Mn(2+).

This sequence belongs to the peptidase M24B family. It depends on Mn(2+) as a cofactor.

This is an uncharacterized protein from Staphylococcus aureus (strain MW2).